A 24-amino-acid polypeptide reads, in one-letter code: Pseudin-2 (24 aa).

In terms of tissue distribution, expressed by the skin glands.

Its subcellular location is the secreted. Its function is as follows. Antimicrobial peptide with activity against fungus (C.albicans) and Gram-positive and Gram-negative bacteria (S.aureus and E.coli). Also has low hemolytic activity against human erythrocytes. The protein is Pseudin-2 of Pseudis paradoxa (Paradoxical frog).